The primary structure comprises 688 residues: Methionine--tRNA ligase (688 aa).

Positions 13 to 23 (PYANGQIHIGH) match the 'HIGH' region motif. Positions 144, 147, 157, and 160 each coordinate Zn(2+). The short motif at 335-339 (KMSKS) is the 'KMSKS' region element. Lys-338 is a binding site for ATP. One can recognise a tRNA-binding domain in the interval 582-688 (DFAKIDLRVA…SGAVPGMRIG (107 aa)).

The protein belongs to the class-I aminoacyl-tRNA synthetase family. MetG type 1 subfamily. As to quaternary structure, homodimer. Zn(2+) serves as cofactor.

It is found in the cytoplasm. It catalyses the reaction tRNA(Met) + L-methionine + ATP = L-methionyl-tRNA(Met) + AMP + diphosphate. In terms of biological role, is required not only for elongation of protein synthesis but also for the initiation of all mRNA translation through initiator tRNA(fMet) aminoacylation. The chain is Methionine--tRNA ligase from Cupriavidus pinatubonensis (strain JMP 134 / LMG 1197) (Cupriavidus necator (strain JMP 134)).